Here is a 144-residue protein sequence, read N- to C-terminus: Sirohydrochlorin cobaltochelatase (144 aa).

Residue H9 is the Proton acceptor of the active site. H9 lines the Co(2+) pocket. Residue H9 participates in Ni(2+) binding. Substrate contacts are provided by residues E45 and 70-75; that span reads LAPGNH. Co(2+) is bound at residue H75. H75 lines the Ni(2+) pocket. Residues 89–112 are disordered; it reads GDDEGGHHHHHDHEHHHHHHDTTA. The span at 95–108 shows a compositional bias: basic residues; that stretch reads HHHHHDHEHHHHHH.

Belongs to the CbiX family. CbiXS subfamily. Homotetramer; dimer of dimers.

The enzyme catalyses Co-sirohydrochlorin + 2 H(+) = sirohydrochlorin + Co(2+). It carries out the reaction Ni-sirohydrochlorin + 2 H(+) = sirohydrochlorin + Ni(2+). It participates in cofactor biosynthesis; adenosylcobalamin biosynthesis; cob(II)yrinate a,c-diamide from sirohydrochlorin (anaerobic route): step 1/10. Catalyzes the insertion of Co(2+) into sirohydrochlorin as part of the anaerobic pathway to cobalamin biosynthesis. Involved in the biosynthesis of the unique nickel-containing tetrapyrrole coenzyme F430, the prosthetic group of methyl-coenzyme M reductase (MCR), which plays a key role in methanogenesis and anaerobic methane oxidation. Catalyzes the insertion of Ni(2+) into sirohydrochlorin to yield Ni-sirohydrochlorin. This is Sirohydrochlorin cobaltochelatase from Methanococcus maripaludis (strain DSM 14266 / JCM 13030 / NBRC 101832 / S2 / LL).